A 464-amino-acid chain; its full sequence is Tyrosine--tRNA ligase, mitochondrial (464 aa).

Tyr61 contributes to the L-tyrosine binding site. ATP is bound at residue Asp65. The 'HIGH' region motif lies at 66–75 (PTADSLHVGN). The L-tyrosine site is built by Asp105, Tyr209, Gln213, Asp216, and Gln235. Residues 270–274 (KFGKS) carry the 'KMSKS' region motif. Lys273 is a binding site for ATP.

It belongs to the class-I aminoacyl-tRNA synthetase family. In terms of assembly, homodimer.

It localises to the mitochondrion matrix. It carries out the reaction tRNA(Tyr) + L-tyrosine + ATP = L-tyrosyl-tRNA(Tyr) + AMP + diphosphate + H(+). Its function is as follows. Catalyzes the attachment of tyrosine to tRNA(Tyr) in a two-step reaction: tyrosine is first activated by ATP to form Tyr-AMP and then transferred to the acceptor end of tRNA(Tyr). This chain is Tyrosine--tRNA ligase, mitochondrial, found in Drosophila melanogaster (Fruit fly).